Consider the following 375-residue polypeptide: Neutral protease 2 homolog MGYG_00813 (375 aa).

An N-terminal signal peptide occupies residues 1–19 (MQVIVALAALSSLAAPALG). A propeptide spanning residues 20-190 (FSIPRGVPVS…SGPLTRIGKR (171 aa)) is cleaved from the precursor. 2 disulfides stabilise this stretch: Cys198–Cys268 and Cys275–Cys293. His318 provides a ligand contact to Zn(2+). Glu319 is an active-site residue. Residues His322 and Asp333 each coordinate Zn(2+).

It belongs to the peptidase M35 family. The cofactor is Zn(2+).

Its subcellular location is the secreted. It catalyses the reaction Preferential cleavage of bonds with hydrophobic residues in P1'. Also 3-Asn-|-Gln-4 and 8-Gly-|-Ser-9 bonds in insulin B chain.. Functionally, secreted metalloproteinase that allows assimilation of proteinaceous substrates. Shows high activities on basic nuclear substrates such as histone and protamine. May be involved in virulence. The polypeptide is Neutral protease 2 homolog MGYG_00813 (Arthroderma gypseum (strain ATCC MYA-4604 / CBS 118893) (Microsporum gypseum)).